A 168-amino-acid polypeptide reads, in one-letter code: uncharacterized protein (168 aa).

2 consecutive 4Fe-4S ferredoxin-type domains span residues 48-78 and 91-122; these read KIPKTVIEELCIGCEGCANVCPTKAIEMIPI and KIPKINPEKCVYCLYCHDFCPVFSVFNEISPI. Cysteine 58, cysteine 61, cysteine 64, cysteine 68, cysteine 100, cysteine 103, cysteine 106, and cysteine 110 together coordinate [4Fe-4S] cluster.

This is an uncharacterized protein from Methanocaldococcus jannaschii (strain ATCC 43067 / DSM 2661 / JAL-1 / JCM 10045 / NBRC 100440) (Methanococcus jannaschii).